A 138-amino-acid chain; its full sequence is Small ribosomal subunit protein uS8c (138 aa).

It belongs to the universal ribosomal protein uS8 family. Part of the 30S ribosomal subunit.

The protein resides in the plastid. The protein localises to the chloroplast. Its function is as follows. One of the primary rRNA binding proteins, it binds directly to 16S rRNA central domain where it helps coordinate assembly of the platform of the 30S subunit. This chain is Small ribosomal subunit protein uS8c (rps8), found in Chlorella vulgaris (Green alga).